The primary structure comprises 683 residues: Methionine--tRNA ligase (683 aa).

A 'HIGH' region motif is present at residues 14 to 24 (PYANGSIHLGH). The Zn(2+) site is built by C145, C148, C158, and C161. Positions 331-335 (KMSKS) match the 'KMSKS' region motif. K334 contributes to the ATP binding site. In terms of domain architecture, tRNA-binding spans 581-683 (AFAAVDLRVA…SGAKPGQRIK (103 aa)).

It belongs to the class-I aminoacyl-tRNA synthetase family. MetG type 1 subfamily. In terms of assembly, homodimer. Zn(2+) serves as cofactor.

The protein localises to the cytoplasm. The enzyme catalyses tRNA(Met) + L-methionine + ATP = L-methionyl-tRNA(Met) + AMP + diphosphate. In terms of biological role, is required not only for elongation of protein synthesis but also for the initiation of all mRNA translation through initiator tRNA(fMet) aminoacylation. In Pseudomonas fluorescens (strain SBW25), this protein is Methionine--tRNA ligase.